Reading from the N-terminus, the 837-residue chain is MGKTQKKNSKGRLDRYYYLAKEKGYRARSSFKIIQINEKFGHFLEKSKVVIDLCAAPGSWCQVASKLCPVNSLIIGVDIVPMKPMPNVITFQSDITTEDCRSRLRGYMKTWKADTVLHDGAPNVGLGWAQDAFTQSHLTLQALKLAVENLVVNGTFVTKIFRSKDYNKLIWVFQQLFEKVEATKPPASRNVSAEIFVVCKGFKAPKKLDPRLLDPKEVFEELPDGPQNMEAKIYNPEKKVRKRQGYEEGDHLLYHECSVLDFVKSEDPITVLGEMNKFTVEQDDPEWKILKRLKQTTNEFMACIEDLKVLGKKDFKMLLKWRKASRDILGLDKDEDKGDIEIEPLNEEEQIEKELRDLQEKQKQKQKREKRRKNEEKQKELTRMQMNMLTPTDIGIEAANIGRDSLFNLKTAEKTGILDKLAKGKKRVIFTEDEIAQDNDLHIDENIVIRDRHDMNEVDDLEGELNAMYQDYKNRKAERDANFRAKQARGGDVEDEWTGFEGTKDSEDENNEPKDYIESDDSELSDEDDDEAINQLISKLKSQNNGSKLSSQAKALFSNPLFENVQPILQSKTDDVVDSESVGDATKISNKRSYNEMKKEDLSDSSDEDSSSESDFEIVANDESDGDIDSDYDSDEERKRTTKEKYDKDIDIATVEAMTLAHQLALGQRSKHDLVDEGFNRYAFRDTENLPEWFLEEEKQHSKVNRPITKEAVMALKEKMKALNARPIKKVAEARARKKMRAVKRLEKIKKKAGLINDDSDKSEKDKAEEIAKLMRKVTKKQKTKPKVTLVVAHGKNKGLSGRPKGIKGKYKMVDGVLKNEQRALKRIAKKHHKKKK.

S-adenosyl-L-methionine contacts are provided by G58, W60, D78, D94, and D119. The active-site Proton acceptor is K159. The stretch at 345–390 (LNEEEQIEKELRDLQEKQKQKQKREKRRKNEEKQKELTRMQMNMLT) forms a coiled coil. Disordered regions lie at residues 359-381 (QEKQ…QKEL), 483-529 (FRAK…DEDD), 573-644 (TDDV…TTKE), and 779-808 (TKKQ…KGIK). Residues 372 to 381 (RKNEEKQKEL) show a composition bias toward basic and acidic residues. Positions 518–529 (ESDDSELSDEDD) are enriched in acidic residues. Residues 593–602 (SYNEMKKEDL) are compositionally biased toward basic and acidic residues. Positions 603-635 (SDSSDEDSSSESDFEIVANDESDGDIDSDYDSD) are enriched in acidic residues.

The protein belongs to the class I-like SAM-binding methyltransferase superfamily. RNA methyltransferase RlmE family. SPB1 subfamily. As to quaternary structure, component of the nucleolar and nucleoplasmic pre-60S ribosomal particle.

The protein localises to the nucleus. The protein resides in the nucleolus. The enzyme catalyses a ribonucleotide in rRNA + S-adenosyl-L-methionine = a 2'-O-methylribonucleotide in rRNA + S-adenosyl-L-homocysteine + H(+). Required for proper assembly of pre-ribosomal particles during the biogenesis of the 60S ribosomal subunit. The polypeptide is AdoMet-dependent rRNA methyltransferase SPB1 (Candida glabrata (strain ATCC 2001 / BCRC 20586 / JCM 3761 / NBRC 0622 / NRRL Y-65 / CBS 138) (Yeast)).